We begin with the raw amino-acid sequence, 298 residues long: ATP phosphoribosyltransferase (298 aa).

The protein belongs to the ATP phosphoribosyltransferase family.

The protein localises to the cytoplasm. The catalysed reaction is 1-(5-phospho-beta-D-ribosyl)-ATP + diphosphate = 5-phospho-alpha-D-ribose 1-diphosphate + ATP. It participates in amino-acid biosynthesis; L-histidine biosynthesis; L-histidine from 5-phospho-alpha-D-ribose 1-diphosphate: step 1/9. Catalyzes the condensation of ATP and 5-phosphoribose 1-diphosphate to form N'-(5'-phosphoribosyl)-ATP (PR-ATP). Has a crucial role in the pathway because the rate of histidine biosynthesis seems to be controlled primarily by regulation of the enzymatic activity. This Candida albicans (strain SC5314 / ATCC MYA-2876) (Yeast) protein is ATP phosphoribosyltransferase (HIS1).